A 119-amino-acid chain; its full sequence is Large ribosomal subunit protein bL19 (119 aa).

Belongs to the bacterial ribosomal protein bL19 family.

This protein is located at the 30S-50S ribosomal subunit interface and may play a role in the structure and function of the aminoacyl-tRNA binding site. This chain is Large ribosomal subunit protein bL19, found in Pelobacter propionicus (strain DSM 2379 / NBRC 103807 / OttBd1).